The primary structure comprises 382 residues: uncharacterized protein (382 aa).

12 helical membrane-spanning segments follow: residues 8-28 (VMLL…LNTL), 45-65 (MVSS…GYLI), 75-95 (YLAS…VGFW), 102-122 (FIAG…LMCS), 131-151 (LLAA…LLVS), 157-177 (LLHV…PLLF), 204-224 (LGVN…GLMP), 231-251 (GMAN…GILG), 270-290 (VQVF…AMAP), 291-311 (ALFI…AWAC), 325-345 (ALLL…AMLM), and 349-369 (SDNL…LMLL).

This sequence belongs to the major facilitator superfamily. YcaD (TC 2.A.1.26) family.

The protein resides in the cell inner membrane. This is an uncharacterized protein from Salmonella dublin (strain CT_02021853).